The chain runs to 55 residues: Large ribosomal subunit protein bL33 (55 aa).

This sequence belongs to the bacterial ribosomal protein bL33 family.

This chain is Large ribosomal subunit protein bL33, found in Escherichia coli (strain K12 / DH10B).